A 294-amino-acid chain; its full sequence is Pantothenate synthetase 3 (294 aa).

Met31 to His38 contributes to the ATP binding site. Catalysis depends on His38, which acts as the Proton donor. Gln62 serves as a coordination point for (R)-pantoate. Gln62 is a binding site for beta-alanine. Gly154–Asp157 serves as a coordination point for ATP. Gln160 lines the (R)-pantoate pocket. Leu191 to Arg194 lines the ATP pocket.

Belongs to the pantothenate synthetase family. Homodimer.

The protein resides in the cytoplasm. It carries out the reaction (R)-pantoate + beta-alanine + ATP = (R)-pantothenate + AMP + diphosphate + H(+). It participates in cofactor biosynthesis; (R)-pantothenate biosynthesis; (R)-pantothenate from (R)-pantoate and beta-alanine: step 1/1. Catalyzes the condensation of pantoate with beta-alanine in an ATP-dependent reaction via a pantoyl-adenylate intermediate. The protein is Pantothenate synthetase 3 of Frankia alni (strain DSM 45986 / CECT 9034 / ACN14a).